A 546-amino-acid chain; its full sequence is (-)-5-epieremophilene synthase STPS2 (546 aa).

Mg(2+) contacts are provided by Asp299, Asp303, Asp442, Thr446, and Glu450. The short motif at 299-303 (DDTYD) is the DDXXD motif element.

Belongs to the terpene synthase family. Tpsa subfamily. As to quaternary structure, monomer. It depends on Mg(2+) as a cofactor. In terms of tissue distribution, highly expressed in leaves. Expressed at levels in flowers.

The enzyme catalyses (2E,6E)-farnesyl diphosphate = (-)-5-epi-eremophilene + diphosphate. It participates in secondary metabolite biosynthesis; terpenoid biosynthesis. In terms of biological role, sesquiterpene synthase that catalyzes the conversion of farnesyl diphosphate to (-)-5-epi-eremophilene. The chain is (-)-5-epieremophilene synthase STPS2 from Salvia miltiorrhiza (Chinese sage).